A 244-amino-acid polypeptide reads, in one-letter code: Ribosomal RNA small subunit methyltransferase NEP1 (244 aa).

The interval 1-34 is disordered; it reads MAAPSDGFKPRERSGGEQAQDWDALPPKRPRLGA. Position 2 is an N-acetylalanine (alanine 2). 2 positions are modified to phosphoserine: serine 5 and serine 14. Residues threonine 176, glycine 201, glycine 206, and 219 to 224 contribute to the S-adenosyl-L-methionine site; that span reads ISNYPL.

This sequence belongs to the class IV-like SAM-binding methyltransferase superfamily. RNA methyltransferase NEP1 family. As to quaternary structure, homodimer. Part of the small subunit (SSU) processome, composed of more than 70 proteins and the RNA chaperone small nucleolar RNA (snoRNA) U3.

The protein localises to the nucleus. It localises to the nucleolus. The catalysed reaction is pseudouridine(1248) in human 18S rRNA + S-adenosyl-L-methionine = N(1)-methylpseudouridine(1248) in human 18S rRNA + S-adenosyl-L-homocysteine + H(+). Its function is as follows. S-adenosyl-L-methionine-dependent pseudouridine N(1)-methyltransferase that methylates pseudouridine at position 1248 (Psi1248) in 18S rRNA. Involved the biosynthesis of the hypermodified N1-methyl-N3-(3-amino-3-carboxypropyl) pseudouridine (m1acp3-Psi) conserved in eukaryotic 18S rRNA. Is not able to methylate uridine at this position. Also has an essential role in 40S ribosomal subunit biogenesis independent on its methyltransferase activity, facilitating the incorporation of ribosomal protein S19 during the formation of pre-ribosomes. Part of the small subunit (SSU) processome, first precursor of the small eukaryotic ribosomal subunit. During the assembly of the SSU processome in the nucleolus, many ribosome biogenesis factors, an RNA chaperone and ribosomal proteins associate with the nascent pre-rRNA and work in concert to generate RNA folding, modifications, rearrangements and cleavage as well as targeted degradation of pre-ribosomal RNA by the RNA exosome. This is Ribosomal RNA small subunit methyltransferase NEP1 from Homo sapiens (Human).